A 762-amino-acid polypeptide reads, in one-letter code: Lysyl oxidase homolog 2B (762 aa).

Residues 1-20 (MLALWSISFVLLCSWRLSYA) form the signal peptide. 4 SRCR domains span residues 53 to 154 (LRLA…VVCS), 183 to 292 (IRPI…VSCI), 316 to 417 (VRLR…VKCN), and 427 to 536 (LRLS…VSCS). 9 cysteine pairs are disulfide-bonded: cysteine 79-cysteine 143, cysteine 92-cysteine 153, cysteine 123-cysteine 133, cysteine 213-cysteine 281, cysteine 226-cysteine 291, cysteine 260-cysteine 270, cysteine 341-cysteine 406, cysteine 354-cysteine 416, and cysteine 385-cysteine 395. An N-linked (GlcNAc...) asparagine glycan is attached at asparagine 278. N-linked (GlcNAc...) asparagine glycosylation is present at asparagine 447. Disulfide bonds link cysteine 456/cysteine 522, cysteine 469/cysteine 535, and cysteine 503/cysteine 513. The tract at residues 540–742 (PDLVLNPQVV…WMYNCHIGGS (203 aa)) is lysyl-oxidase like. Ca(2+)-binding residues include aspartate 541 and leucine 542. Cystine bridges form between cysteine 565/cysteine 616, cysteine 571/cysteine 686, cysteine 648/cysteine 664, and cysteine 654/cysteine 676. Cu cation-binding residues include histidine 617, histidine 619, and histidine 621. The N-linked (GlcNAc...) asparagine glycan is linked to asparagine 635. A cross-link (lysine tyrosylquinone (Lys-Tyr)) is located at residues 644–680 (KASFCLEDSECDEGIEKRYECANFGEQGITVGCWDTY). Tyrosine 680 bears the 2',4',5'-topaquinone mark. Residues glutamate 713, aspartate 715, asparagine 718, and asparagine 719 each contribute to the Ca(2+) site. A disulfide bridge connects residues cysteine 723 and cysteine 737.

This sequence belongs to the lysyl oxidase family. Cu cation serves as cofactor. Lysine tyrosylquinone residue is required as a cofactor. Post-translationally, the lysine tyrosylquinone cross-link (LTQ) is generated by condensation of the epsilon-amino group of a lysine with a topaquinone produced by oxidation of tyrosine.

The protein resides in the secreted. The protein localises to the extracellular space. It localises to the extracellular matrix. Its subcellular location is the basement membrane. It is found in the nucleus. The protein resides in the chromosome. The protein localises to the endoplasmic reticulum. The catalysed reaction is L-lysyl-[protein] + O2 + H2O = (S)-2-amino-6-oxohexanoyl-[protein] + H2O2 + NH4(+). Its function is as follows. Mediates the post-translational oxidative deamination of lysine residues on target proteins leading to the formation of deaminated lysine (allysine). Acts as a transcription corepressor and specifically mediates deamination of trimethylated 'Lys-4' of histone H3 (H3K4me3), a specific tag for epigenetic transcriptional activation. Shows no activity against histone H3 when it is trimethylated on 'Lys-9' (H3K9me3) or 'Lys-27' (H3K27me3) or when 'Lys-4' is monomethylated (H3K4me1) or dimethylated (H3K4me2). Also mediates deamination of methylated TAF10, a member of the transcription factor IID (TFIID) complex, which induces release of TAF10 from promoters, leading to inhibition of TFIID-dependent transcription. LOXL2-mediated deamination of TAF10 results in transcriptional repression of genes required for embryonic stem cell pluripotency. Involved in epithelial to mesenchymal transition (EMT) and participates in repression of E-cadherin, probably by mediating deamination of histone H3. When secreted into the extracellular matrix, promotes cross-linking of extracellular matrix proteins by mediating oxidative deamination of peptidyl lysine residues in precursors to fibrous collagen and elastin. Acts as a regulator of sprouting angiogenesis, probably via collagen IV scaffolding. Acts as a regulator of chondrocyte differentiation, probably by regulating expression of factors that control chondrocyte differentiation. Required with loxl2a for correct expression of Sox2 and for neural differentiation. The protein is Lysyl oxidase homolog 2B (loxl2b) of Danio rerio (Zebrafish).